The chain runs to 67 residues: Lantibiotic Flvbeta.b (67 aa).

Positions 1-34 are cleaved as a propeptide — cleaved by FlvT; sequence MDNNTKLQKLYEQLAATGSEKELDAMLDENMAGA. Residue Ser36 is modified to 2,3-didehydroalanine (Ser); by FlvM2. Residues Thr39 and Thr43 each carry the 2,3-didehydrobutyrine; by FlvM2 modification. Cross-links (beta-methyllanthionine (Thr-Cys); by FlvM2) lie at residues 50–56, 58–61, and 62–65; these read TTGFDWC, TGAC, and TYSC.

Contains DL-beta-methyllanthionine, when coepressed in E.coli with the flavecin synthetase FlvM2.

Its subcellular location is the secreted. Functionally, lanthionine-containing peptide antibiotic (lantibiotic) only active on Gram-positive bacteria in synergy with Flvalpha.a. Is not active in absence of Flvalpha.a, which is encoded by the same operon than Flvbeta.b. The bactericidal activity of lantibiotics is based on depolarization of energized bacterial cytoplasmic membranes, initiated by the formation of aqueous transmembrane pores. The chain is Lantibiotic Flvbeta.b from Ruminococcus flavefaciens.